We begin with the raw amino-acid sequence, 287 residues long: Pyridoxal kinase PdxY (287 aa).

Residues serine 9 and threonine 44–glutamine 45 contribute to the substrate site. Residues aspartate 111, alanine 143, glutamate 148, lysine 181, and arginine 208 to valine 211 contribute to the ATP site. Aspartate 223 serves as a coordination point for substrate.

Belongs to the pyridoxine kinase family. PdxY subfamily. Homodimer. The cofactor is Mg(2+).

It catalyses the reaction pyridoxal + ATP = pyridoxal 5'-phosphate + ADP + H(+). It participates in cofactor metabolism; pyridoxal 5'-phosphate salvage; pyridoxal 5'-phosphate from pyridoxal: step 1/1. Its function is as follows. Pyridoxal kinase involved in the salvage pathway of pyridoxal 5'-phosphate (PLP). Catalyzes the phosphorylation of pyridoxal to PLP. In Photorhabdus laumondii subsp. laumondii (strain DSM 15139 / CIP 105565 / TT01) (Photorhabdus luminescens subsp. laumondii), this protein is Pyridoxal kinase PdxY.